The following is a 373-amino-acid chain: Chaperone protein DnaJ (373 aa).

A J domain is found at 5–69 (DYYEVLGVNK…NKRVNYDQFG (65 aa)). The CR-type zinc finger occupies 130-212 (GTKKEISIKK…CKGKGTENKT (83 aa)). Zn(2+)-binding residues include cysteine 143, cysteine 146, cysteine 160, cysteine 163, cysteine 186, cysteine 189, cysteine 200, and cysteine 203. CXXCXGXG motif repeat units lie at residues 143–150 (CHTCNGDG), 160–167 (CSYCNGAG), 186–193 (CPKCEGSG), and 200–207 (CPTCKGKG).

The protein belongs to the DnaJ family. As to quaternary structure, homodimer. Zn(2+) is required as a cofactor.

It localises to the cytoplasm. Its function is as follows. Participates actively in the response to hyperosmotic and heat shock by preventing the aggregation of stress-denatured proteins and by disaggregating proteins, also in an autonomous, DnaK-independent fashion. Unfolded proteins bind initially to DnaJ; upon interaction with the DnaJ-bound protein, DnaK hydrolyzes its bound ATP, resulting in the formation of a stable complex. GrpE releases ADP from DnaK; ATP binding to DnaK triggers the release of the substrate protein, thus completing the reaction cycle. Several rounds of ATP-dependent interactions between DnaJ, DnaK and GrpE are required for fully efficient folding. Also involved, together with DnaK and GrpE, in the DNA replication of plasmids through activation of initiation proteins. This Staphylococcus epidermidis (strain ATCC 35984 / DSM 28319 / BCRC 17069 / CCUG 31568 / BM 3577 / RP62A) protein is Chaperone protein DnaJ.